The chain runs to 130 residues: MSMQDPIADMLTRIRNGQAANKVAVTMPSSKLKVAIANVLKEEGYIEDFKIEGDTKPVLELELKYFQGKAVVESIQRISRPGLRIYKRKDELPKVMAGLGIAVISTSKGVMTDRAARQAGLGGEIICYVA.

It belongs to the universal ribosomal protein uS8 family. In terms of assembly, part of the 30S ribosomal subunit. Contacts proteins S5 and S12.

Its function is as follows. One of the primary rRNA binding proteins, it binds directly to 16S rRNA central domain where it helps coordinate assembly of the platform of the 30S subunit. This Pectobacterium atrosepticum (strain SCRI 1043 / ATCC BAA-672) (Erwinia carotovora subsp. atroseptica) protein is Small ribosomal subunit protein uS8.